The sequence spans 191 residues: Ubiquinol-cytochrome c reductase iron-sulfur subunit (191 aa).

A helical membrane pass occupies residues Ala-18–Ile-35. The Rieske domain occupies Arg-94–Lys-189. The segment at Asp-95–Pro-116 is disordered. 4 residues coordinate [2Fe-2S] cluster: Cys-133, His-135, Cys-153, and His-156. Cys-138 and Cys-155 form a disulfide bridge.

Belongs to the Rieske iron-sulfur protein family. As to quaternary structure, the main subunits of complex b-c1 are: cytochrome b, cytochrome c1 and the Rieske protein. [2Fe-2S] cluster is required as a cofactor.

It localises to the cell membrane. It catalyses the reaction a quinol + 2 Fe(III)-[cytochrome c](out) = a quinone + 2 Fe(II)-[cytochrome c](out) + 2 H(+)(out). Component of the ubiquinol-cytochrome c reductase complex (complex III or cytochrome b-c1 complex), which is a respiratory chain that generates an electrochemical potential coupled to ATP synthesis. The polypeptide is Ubiquinol-cytochrome c reductase iron-sulfur subunit (petA) (Rhodobacter capsulatus (strain ATCC BAA-309 / NBRC 16581 / SB1003)).